We begin with the raw amino-acid sequence, 138 residues long: Cysteine desulfuration protein SufE (138 aa).

The Cysteine persulfide intermediate role is filled by C51.

Belongs to the SufE family. Homodimer. Interacts with SufS.

It is found in the cytoplasm. Its pathway is cofactor biosynthesis; iron-sulfur cluster biosynthesis. Participates in cysteine desulfuration mediated by SufS. Cysteine desulfuration mobilizes sulfur from L-cysteine to yield L-alanine and constitutes an essential step in sulfur metabolism for biosynthesis of a variety of sulfur-containing biomolecules. Functions as a sulfur acceptor for SufS, by mediating the direct transfer of the sulfur atom from the S-sulfanylcysteine of SufS, an intermediate product of cysteine desulfuration process. This chain is Cysteine desulfuration protein SufE, found in Salmonella dublin (strain CT_02021853).